We begin with the raw amino-acid sequence, 466 residues long: MEYRVERDTMGEVKVPADRYWGAQTQRSLEHFRIGAWRFRMPLEIIRAYGMLKKAAARANLELGELPEEIARAIIQAAEEVIAGKLDDHFPLVVFQTGSGTQTNMNVNEVIANRASEILGKPLGSKYVHPNDHVNRGQSSNDTFPTAMYVATVLALHQHLYPAVEGLIATFEEKARAFDGIVKVGRTHLMDAVPITLGQEVGSWAAQLRNTLAMVKEAEKGLYNLAIGGTAVGTGLNAHPRFGELVARYLAEETGLPFRVAENRFAALAAHDELVHVMGALRTLAGALMKIGNDIRWLASGPYGGIGEIFIPANEPGSSIMPGKVNPTQVEALPWVVVRVFGNDQAVAFAGSQGNFQLNVYKPVMVDAALESIKLLGDAVASFDQHLAQGIEPNLERIEEHLNKNPMLATALNKAIGYDKAAEIVKKAIKEKKSLKQAALELGYLTEEEFDRIVVPMRLAKPHENA.

Substrate-binding positions include 99-101 (SGT), 129-132 (HPND), 139-141 (SSN), and Thr-187. Residue His-188 is the Proton donor/acceptor of the active site. Ser-318 is a catalytic residue. Residues Ser-319 and 324–326 (KVN) each bind substrate.

It belongs to the class-II fumarase/aspartase family. Fumarase subfamily. Homotetramer.

The protein resides in the cytoplasm. The catalysed reaction is (S)-malate = fumarate + H2O. The protein operates within carbohydrate metabolism; tricarboxylic acid cycle; (S)-malate from fumarate: step 1/1. Involved in the TCA cycle. Catalyzes the stereospecific interconversion of fumarate to L-malate. The polypeptide is Fumarate hydratase class II (Thermus aquaticus).